The primary structure comprises 360 residues: POU domain, class 5, transcription factor 1 (360 aa).

Disordered regions lie at residues 1 to 53 and 87 to 117; these read MAGH…GVGP and QGGL…PCTV. The short motif at 4–12 is the 9aaTAD element; it reads HLASDFAFS. Gly residues predominate over residues 17–26; that stretch reads GGGDGPGGPE. Phosphoserine; by MAPK is present on S111. K123 participates in a covalent cross-link: Glycyl lysine isopeptide (Lys-Gly) (interchain with G-Cter in SUMO). The region spanning 138–212 is the POU-specific domain; the sequence is DIKALQKELE…LLQKWVEEAD (75 aa). DNA-binding residues include R157 and Q164. DNA-binding regions lie at residues 180 to 186 and 193 to 196; these read SQTTICR and SFKN. Residues 230–289 constitute a DNA-binding region (homeobox); sequence RKRKRTSIENRVRGSLENLFLQCPKPTLQQISHIAQQLGLEKDVVRVWFCNRRQKGKRSS. The residue at position 235 (T235) is a Phosphothreonine. 4 positions are modified to phosphoserine: S236, S289, S290, and S355.

The protein belongs to the POU transcription factor family. Class-5 subfamily. In terms of assembly, interacts with PKM. Interacts with WWP2. Interacts with UBE2I and ZSCAN10. Interacts with PCGF1. Interacts with ESRRB; recruits ESRRB near the POU5F1-SOX2 element in the NANOG proximal promoter; the interaction is DNA independent. Interacts with ZNF322. Interacts with MAPK8 and MAPK9; the interaction allows MAPK8 and MAPK9 to phosphorylate POU5F1 on Ser-355. Interacts (when phosphorylated on Ser-355) with FBXW8. Interacts with FBXW4. Interacts with SOX2 and SOX15; binds synergistically with either SOX2 or SOX15 to DNA. Interacts with DDX56. Post-translationally, sumoylation enhances the protein stability, DNA binding and transactivation activity. Sumoylation is required for enhanced YES1 expression. Ubiquitinated; undergoes 'Lys-63'-linked polyubiquitination by WWP2 leading to proteasomal degradation. In terms of processing, ERK1/2-mediated phosphorylation at Ser-111 promotes nuclear exclusion and proteasomal degradation. Phosphorylation at Thr-235 and Ser-236 decrease DNA-binding and alters ability to activate transcription.

Its subcellular location is the cytoplasm. The protein localises to the nucleus. Functionally, transcription factor that binds to the octamer motif (5'-ATTTGCAT-3'). Forms a trimeric complex with SOX2 or SOX15 on DNA and controls the expression of a number of genes involved in embryonic development such as YES1, FGF4, UTF1 and ZFP206. Critical for early embryogenesis and for embryonic stem cell pluripotency. The sequence is that of POU domain, class 5, transcription factor 1 (POU5F1) from Macaca mulatta (Rhesus macaque).